The following is a 131-amino-acid chain: ATP synthase epsilon chain (131 aa).

The protein belongs to the ATPase epsilon chain family. In terms of assembly, F-type ATPases have 2 components, CF(1) - the catalytic core - and CF(0) - the membrane proton channel. CF(1) has five subunits: alpha(3), beta(3), gamma(1), delta(1), epsilon(1). CF(0) has three main subunits: a, b and c.

It localises to the cell inner membrane. Its function is as follows. Produces ATP from ADP in the presence of a proton gradient across the membrane. The chain is ATP synthase epsilon chain from Helicobacter hepaticus (strain ATCC 51449 / 3B1).